Here is a 406-residue protein sequence, read N- to C-terminus: MTFSVDKVRADFPVLSREVNGLPLAYLDSAASAQKPGQVIDAEAEFYRHGYAAVHRGIHTLSAQATEKMENVRKQASLFINARSAEELVFVRGTTEGINLVANSWGNSNVRAGDNIIISQMEHHANIVPWQMLCARVGAELRVIPLNPDGTLQLETLPTLFDEKTRLLAITHVSNVLGTENPLAEMITLAHQHGAKVLVDGAQAVMHHLVDVQALDCDFYVFSGHKLYGPTGIGILYVKEALLQEMPPWEGGGSMIATVSLSEGTTWTKAPWRFEAGTPNTGGIIGLGAALEYVSALGLNNIAEYEQNLMHYALSQLESVPDLTLYGPQNRLGVIAFNLGKHHAYDVGSFLDNYGIAVRTGHHCAMPLMAYYNVPAMCRASLAMYNTHEEVDRLVTGLQRIHRLLG.

Lys226 carries the post-translational modification N6-(pyridoxal phosphate)lysine. The Cysteine persulfide intermediate role is filled by Cys364.

The protein belongs to the class-V pyridoxal-phosphate-dependent aminotransferase family. Csd subfamily. In terms of assembly, homodimer. Interacts with SufE and the SufBCD complex composed of SufB, SufC and SufD. The interaction with SufE is required to mediate the direct transfer of the sulfur atom from the S-sulfanylcysteine. Pyridoxal 5'-phosphate serves as cofactor.

It localises to the cytoplasm. It catalyses the reaction (sulfur carrier)-H + L-cysteine = (sulfur carrier)-SH + L-alanine. The enzyme catalyses L-selenocysteine + AH2 = hydrogenselenide + L-alanine + A + H(+). It functions in the pathway cofactor biosynthesis; iron-sulfur cluster biosynthesis. In terms of biological role, cysteine desulfurases mobilize the sulfur from L-cysteine to yield L-alanine, an essential step in sulfur metabolism for biosynthesis of a variety of sulfur-containing biomolecules. Component of the suf operon, which is activated and required under specific conditions such as oxidative stress and iron limitation. Acts as a potent selenocysteine lyase in vitro, that mobilizes selenium from L-selenocysteine. Selenocysteine lyase activity is however unsure in vivo. In Escherichia coli O9:H4 (strain HS), this protein is Cysteine desulfurase.